We begin with the raw amino-acid sequence, 262 residues long: Phosphoribosyl 1,2-cyclic phosphate 1,2-diphosphodiesterase (262 aa).

9 residues coordinate Mn(2+): H6, H8, D13, H38, E63, H76, H193, D245, and H247.

Belongs to the PHP family. Mn(2+) serves as cofactor.

It carries out the reaction alpha-D-ribose 1,2-cyclic phosphate 5-phosphate + H2O = D-ribose 2,5-bisphosphate + H(+). The enzyme catalyses D-ribose 2,5-bisphosphate + H2O = D-ribose 5-phosphate + phosphate. In terms of biological role, involved in degradation of methylphosphonate. Catalyzes the hydrolysis of the phosphate ester at carbon-1 of 5-phospho-D-ribose 1,2-cyclic phosphate to form ribose 2,5-bisphosphate. This intermediate is then hydrolyzed to ribose-5-phosphate and inorganic phosphate. This chain is Phosphoribosyl 1,2-cyclic phosphate 1,2-diphosphodiesterase, found in Eggerthella lenta (strain ATCC 25559 / DSM 2243 / CCUG 17323 / JCM 9979 / KCTC 3265 / NCTC 11813 / VPI 0255 / 1899 B) (Eubacterium lentum).